Consider the following 1067-residue polypeptide: Myocardin-related transcription factor B (1067 aa).

3 RPEL repeats span residues Glu46–Lys71, Asn90–Leu115, and Asp134–Leu159. Disordered stretches follow at residues Asn175–Ile223 and Pro249–Lys286. 2 stretches are compositionally biased toward polar residues: residues Gln193–Ala203 and Ser212–Ile223. Positions Lys268–Pro283 are enriched in basic and acidic residues. The 35-residue stretch at Leu390–Gln424 folds into the SAP domain. Residues Gly540–Gln594 adopt a coiled-coil conformation. The segment covering Ile799–Thr819 has biased composition (polar residues). Positions Ile799–Pro829 are disordered.

As to quaternary structure, interacts with SRF.

It is found in the nucleus. In terms of biological role, poor transcriptional factor which uses the canonical single or multiple CArG boxes DNA sequence. Acts as a cofactor of serum response factor (SRF) with the potential to modulate SRF target genes. In Xenopus laevis (African clawed frog), this protein is Myocardin-related transcription factor B (mrtfb).